Here is a 596-residue protein sequence, read N- to C-terminus: Protein kinase C iota type (596 aa).

Over residues 1–12 the composition is skewed to polar residues; it reads MPTQRDSSTMSH. The disordered stretch occupies residues 1–23; that stretch reads MPTQRDSSTMSHTVAGGGSGDHS. Pro-2 is modified (N-acetylproline). The required for interaction with RAB2 stretch occupies residues 2–28; sequence PTQRDSSTMSHTVAGGGSGDHSHQVRV. The regulatory domain stretch occupies residues 2–253; that stretch reads PTQRDSSTMS…KASSSLGLQD (252 aa). Thr-3 carries the post-translational modification Phosphothreonine. Phosphoserine is present on residues Ser-7 and Ser-8. Thr-9 bears the Phosphothreonine mark. The PB1 domain occupies 25-108; that stretch reads QVRVKAYYRG…SELLIHVFPC (84 aa). The interaction with PARD6A stretch occupies residues 72–91; the sequence is DEEGDPCTVSSQLELEEAFR. The short motif at 125 to 134 is the Pseudosubstrate element; it reads YRRGARRWRK. The Phorbol-ester/DAG-type zinc-finger motif lies at 140–190; the sequence is GHTFQAKRFNRRAHCAICTDRIWGLGRQGYKCINCKLLVHKKCHKLVTIEC. The disordered stretch occupies residues 221–246; that stretch reads PSSHESLDQVGEEKEAMNTRESGKAS. Residues 225–243 show a composition bias toward basic and acidic residues; the sequence is ESLDQVGEEKEAMNTRESG. Residues 254–522 form the Protein kinase domain; the sequence is FDLLRVIGRG…FADIQGHPFF (269 aa). 260 to 268 is an ATP binding site; that stretch reads IGRGSYAKV. Phosphotyrosine; by SRC is present on residues Tyr-265 and Tyr-280. Lys-283 contributes to the ATP binding site. Residue Tyr-334 is modified to Phosphotyrosine; by SRC. Asp-378 acts as the Proton acceptor in catalysis. Thr-412 carries the phosphothreonine; by PDPK1 modification. One can recognise an AGC-kinase C-terminal domain in the interval 523-594; that stretch reads RNVDWDMMEQ…INPLLMSAEE (72 aa). Thr-564 carries the phosphothreonine modification.

It belongs to the protein kinase superfamily. AGC Ser/Thr protein kinase family. PKC subfamily. Forms a complex with SQSTM1 and MP2K5. Interacts directly with SQSTM1. Interacts with IKBKB. Interacts with PARD6A, PARD6B and PARD6G. Part of a quaternary complex containing aPKC, PARD3, a PARD6 protein (PARD6A, PARD6B or PARD6G) and a GTPase protein (CDC42 or RAC1). Part of a complex with LLGL1 and PARD6B. Interacts with ADAP1/CENTA1. Interaction with SMG1, through the ZN-finger domain, activates the kinase activity. Interacts with CDK7. Forms a complex with RAB2A and GAPDH involved in recruitment onto the membrane of vesicular tubular clusters (VTCs). Interacts with ECT2 ('Thr-359' phosphorylated form). Interacts with VAMP2. Interacts with WDFY2 (via WD repeats 1-3). Post-translationally, phosphorylation at Thr-412 in the activation loop is not mandatory for activation. Upon neuronal growth factor (NGF) stimulation, phosphorylated by SRC at Tyr-265, Tyr-280 and Tyr-334. Phosphorylation at Tyr-265 facilitates binding to KPNB1/importin-beta regulating entry of PRKCI into the nucleus. Phosphorylation on Tyr-334 is important for NF-kappa-B stimulation. Phosphorylated at Thr-564 during the initial phase of long term potentiation.

Its subcellular location is the cytoplasm. It localises to the membrane. The protein localises to the endosome. It is found in the nucleus. It catalyses the reaction L-seryl-[protein] + ATP = O-phospho-L-seryl-[protein] + ADP + H(+). It carries out the reaction L-threonyl-[protein] + ATP = O-phospho-L-threonyl-[protein] + ADP + H(+). Its activity is regulated as follows. Atypical PKCs (PRKCI and PRKCZ) exhibit an elevated basal enzymatic activity (that may be due to the interaction with SMG1 or SQSTM1) and are not regulated by diacylglycerol, phosphatidylserine, phorbol esters or calcium ions. Two specific sites, Thr-412 (activation loop of the kinase domain) and Thr-564 (turn motif), need to be phosphorylated for its full activation. Might also be a target for novel lipid activators that are elevated during nutrient-stimulated insulin secretion. In terms of biological role, calcium- and diacylglycerol-independent serine/ threonine-protein kinase that plays a general protective role against apoptotic stimuli, is involved in NF-kappa-B activation, cell survival, differentiation and polarity, and contributes to the regulation of microtubule dynamics in the early secretory pathway. Is necessary for BCR-ABL oncogene-mediated resistance to apoptotic drug in leukemia cells, protecting leukemia cells against drug-induced apoptosis. In cultured neurons, prevents amyloid beta protein-induced apoptosis by interrupting cell death process at a very early step. In glioblastoma cells, may function downstream of phosphatidylinositol 3-kinase (PI(3)K) and PDPK1 in the promotion of cell survival by phosphorylating and inhibiting the pro-apoptotic factor BAD. Can form a protein complex in non-small cell lung cancer (NSCLC) cells with PARD6A and ECT2 and regulate ECT2 oncogenic activity by phosphorylation, which in turn promotes transformed growth and invasion. In response to nerve growth factor (NGF), acts downstream of SRC to phosphorylate and activate IRAK1, allowing the subsequent activation of NF-kappa-B and neuronal cell survival. Functions in the organization of the apical domain in epithelial cells by phosphorylating EZR. This step is crucial for activation and normal distribution of EZR at the early stages of intestinal epithelial cell differentiation. Forms a protein complex with LLGL1 and PARD6B independently of PARD3 to regulate epithelial cell polarity. Plays a role in microtubule dynamics in the early secretory pathway through interaction with RAB2A and GAPDH and recruitment to vesicular tubular clusters (VTCs). In human coronary artery endothelial cells (HCAEC), is activated by saturated fatty acids and mediates lipid-induced apoptosis. Involved in early synaptic long term potentiation phase in CA1 hippocampal cells and short term memory formation. In Pongo abelii (Sumatran orangutan), this protein is Protein kinase C iota type (PRKCI).